The primary structure comprises 254 residues: Axonemal dynein light intermediate polypeptide 1 (254 aa).

Positions M1–L55 are disordered. A coiled-coil region spans residues A175 to Q245.

Belongs to the inner dynein arm light chain family.

The protein resides in the cell projection. Its subcellular location is the cilium. The protein localises to the flagellum. It localises to the dynein axonemal particle. It is found in the cytoplasm. Functionally, involved in sperm flagellum assembly. In Xenopus laevis (African clawed frog), this protein is Axonemal dynein light intermediate polypeptide 1.